We begin with the raw amino-acid sequence, 332 residues long: Alpha/beta hydrolase domain-containing protein aho-3 (332 aa).

Positions 1–15 (MSSGAPSGSSMSSTP) are enriched in low complexity. The tract at residues 1-24 (MSSGAPSGSSMSSTPGSPPPRAGG) is disordered. Residues S191, D256, and H285 each act as charge relay system in the active site.

The protein belongs to the AB hydrolase superfamily. ABHD17 family. Palmitoylated on cysteine residues located in a cysteine cluster at the N-terminus which promotes membrane localization and localization to sensory neuron endings. Expressed in a subset of neurons including AIY, HSN, ADF, AFD, AWC, AWB and NSM, hypodermis, pharyngeal muscle and intestine.

The protein localises to the cell membrane. It is found in the cytoplasmic vesicle membrane. The catalysed reaction is S-hexadecanoyl-L-cysteinyl-[protein] + H2O = L-cysteinyl-[protein] + hexadecanoate + H(+). Hydrolyzes fatty acids from S-acylated cysteine residues in proteins. Acts in sensory neurons including AWC to regulate starvation-induced thermotaxis plasticity and salt learning behavior. This Caenorhabditis elegans protein is Alpha/beta hydrolase domain-containing protein aho-3.